The following is a 251-amino-acid chain: Phosphate import ATP-binding protein PstB 2 (251 aa).

In terms of domain architecture, ABC transporter spans 5 to 246; it reads ITSKDVHLSY…PKKQITSDYL (242 aa). 37 to 44 serves as a coordination point for ATP; it reads GPSGCGKS.

It belongs to the ABC transporter superfamily. Phosphate importer (TC 3.A.1.7) family. The complex is composed of two ATP-binding proteins (PstB), two transmembrane proteins (PstC and PstA) and a solute-binding protein (PstS).

The protein resides in the cell membrane. The catalysed reaction is phosphate(out) + ATP + H2O = ADP + 2 phosphate(in) + H(+). In terms of biological role, part of the ABC transporter complex PstSACB involved in phosphate import. Responsible for energy coupling to the transport system. This Lactobacillus johnsonii (strain CNCM I-12250 / La1 / NCC 533) protein is Phosphate import ATP-binding protein PstB 2.